The primary structure comprises 1070 residues: DNA-directed RNA polymerase subunit beta (1070 aa).

The protein belongs to the RNA polymerase beta chain family. In plastids the minimal PEP RNA polymerase catalytic core is composed of four subunits: alpha, beta, beta', and beta''. When a (nuclear-encoded) sigma factor is associated with the core the holoenzyme is formed, which can initiate transcription.

Its subcellular location is the plastid. It localises to the chloroplast. The enzyme catalyses RNA(n) + a ribonucleoside 5'-triphosphate = RNA(n+1) + diphosphate. Functionally, DNA-dependent RNA polymerase catalyzes the transcription of DNA into RNA using the four ribonucleoside triphosphates as substrates. The protein is DNA-directed RNA polymerase subunit beta of Morus indica (Mulberry).